The following is a 379-amino-acid chain: Multicilin (379 aa).

Residues 1–129 (MQACEGSAAG…AMDDLIADSS (129 aa)) form a necessary and sufficient for its degradation during the cell cycle region. Disordered stretches follow at residues 26-71 (SRRT…APLP) and 88-107 (LGTEASPSGDSSASQNPSLQ). A compositionally biased stretch (polar residues) spans 92 to 107 (ASPSGDSSASQNPSLQ). Residues 130 to 379 (SLMSPPLTNS…GGYKFRWVPS (250 aa)) form a necessary and sufficient for proper nuclear localization region. Positions 171–241 (PPPTEQYWKE…SVLDKLMITQ (71 aa)) are necessary and sufficient for interaction with GMNN and sufficient for homodimerization. Positions 175-223 (EQYWKEVADQNQRALGTALIENNQLHVTLTQKQEEIASLRERNVQLKEL) form a coiled coil. Residues 291 to 309 (NRDPKRPRLQPEPDSKDCS) show a composition bias toward basic and acidic residues. Residues 291 to 312 (NRDPKRPRLQPEPDSKDCSSRN) are disordered.

It belongs to the geminin family. Heterodimer (via coiled-coil domain) with GMNN (via coiled-coil domain); targets GMNN to the nucleus. Can form homodimers (in vitro, via coiled-coil domain), but these are much less stable than the heterodimer formed with GMNN.

Its subcellular location is the nucleus. Its function is as follows. Transcription regulator specifically required for multiciliate cell differentiation. Acts in a multiprotein complex containing E2F4 and E2F5 that binds and activates genes required for centriole biogenesis. Required for the deuterosome-mediated acentriolar pathway. Plays a role in mitotic cell cycle progression by promoting cell cycle exit. Modulates GMNN activity by reducing its affinity for CDT1. This Mus musculus (Mouse) protein is Multicilin (Mcidas).